The primary structure comprises 660 residues: DNA mismatch repair protein MutL (660 aa).

Belongs to the DNA mismatch repair MutL/HexB family.

This protein is involved in the repair of mismatches in DNA. It is required for dam-dependent methyl-directed DNA mismatch repair. May act as a 'molecular matchmaker', a protein that promotes the formation of a stable complex between two or more DNA-binding proteins in an ATP-dependent manner without itself being part of a final effector complex. This chain is DNA mismatch repair protein MutL, found in Solibacter usitatus (strain Ellin6076).